Here is a 365-residue protein sequence, read N- to C-terminus: Histidinol-phosphate aminotransferase (365 aa).

Lysine 222 carries the post-translational modification N6-(pyridoxal phosphate)lysine.

It belongs to the class-II pyridoxal-phosphate-dependent aminotransferase family. Histidinol-phosphate aminotransferase subfamily. In terms of assembly, homodimer. Pyridoxal 5'-phosphate serves as cofactor.

The catalysed reaction is L-histidinol phosphate + 2-oxoglutarate = 3-(imidazol-4-yl)-2-oxopropyl phosphate + L-glutamate. Its pathway is amino-acid biosynthesis; L-histidine biosynthesis; L-histidine from 5-phospho-alpha-D-ribose 1-diphosphate: step 7/9. The polypeptide is Histidinol-phosphate aminotransferase (Geobacillus thermodenitrificans (strain NG80-2)).